The primary structure comprises 377 residues: Histone deacetylase 8 (377 aa).

Residues 5–336 (RVDVFWHEGM…LHAMLEGVLK (332 aa)) form a histone deacetylase region. Histidine 145 acts as the Proton donor/acceptor in catalysis. Zn(2+) contacts are provided by aspartate 182, histidine 184, and aspartate 274.

This sequence belongs to the histone deacetylase family. Zn(2+) is required as a cofactor. As to expression, expressed in stems, leaves, flowers, siliques and mature seeds.

The protein resides in the nucleus. The protein localises to the cytoplasm. It carries out the reaction N(6)-acetyl-L-lysyl-[histone] + H2O = L-lysyl-[histone] + acetate. In terms of biological role, responsible for the deacetylation of lysine residues on the N-terminal part of the core histones (H2A, H2B, H3 and H4). Histone deacetylation gives a tag for epigenetic repression and plays an important role in transcriptional regulation, cell cycle progression and developmental events. Histone deacetylases act via the formation of large multiprotein complexes. The sequence is that of Histone deacetylase 8 from Arabidopsis thaliana (Mouse-ear cress).